We begin with the raw amino-acid sequence, 429 residues long: MSTLVVLGTQWGDEGKGKVIHYLAKQADYIVRYQGGNNAGHTLIHENKPFILHLIPSGILFPDKYCLITNGVVVDPKALKEEIAILDKNNISVEKRFFISEQAHIILPYHKLIDGILEEENVKIGTTRRGIGPAYADKVKRIGIRVVDYLEKDVFEDLLEKNLIEKTPILKNSGVDIANLKEEILKDREELSIFLEPFVTDTSIMIANAIKKNKKILFESAQGTMLDLDFGTYPFVTSSNPIAGGVCSGAGVGPTKIDSVLGVVKAYTTRVGEGPFTVELFDEMGKFLREKGAEYGATTGRPRRCGWFDAVVVRHSVRLSGIKHLILTKLDCVEDIDKIKICVAYKYKDKLYKEFPASRTVQKYAEPVYEEMPGFKGKVKGIIDFEKLPLNAQKYVKRLEQLVDAPIDLISLGRKREETIEVRKGVNWF.

GTP-binding positions include 12 to 18 and 40 to 42; these read GDEGKGK and GHT. D13 serves as the catalytic Proton acceptor. Positions 13 and 40 each coordinate Mg(2+). IMP is bound by residues 13 to 16, 38 to 41, T127, R141, Q222, T237, and R301; these read DEGK and NAGH. Residue H41 is the Proton donor of the active site. A substrate-binding site is contributed by 297–303; it reads ATTGRPR. Residues R303, 329–331, and 411–413 each bind GTP; these read KLD and SLG.

The protein belongs to the adenylosuccinate synthetase family. Homodimer. Mg(2+) serves as cofactor.

The protein localises to the cytoplasm. It catalyses the reaction IMP + L-aspartate + GTP = N(6)-(1,2-dicarboxyethyl)-AMP + GDP + phosphate + 2 H(+). Its pathway is purine metabolism; AMP biosynthesis via de novo pathway; AMP from IMP: step 1/2. In terms of biological role, plays an important role in the de novo pathway of purine nucleotide biosynthesis. Catalyzes the first committed step in the biosynthesis of AMP from IMP. This is Adenylosuccinate synthetase from Endomicrobium trichonymphae.